A 546-amino-acid chain; its full sequence is Cytokine-like nuclear factor N-PAC (546 aa).

Positions 8–66 constitute a PWWP domain; it reads LGDLVWGKLGRYPPWPGKIVNPPKDLKKPRGKKCFFVKFFGTEDHAWIKVEQLKPYHAH. Basic and acidic residues-rich tracts occupy residues 91–145 and 161–181; these read RRAK…EGKK and RAQE…KDLT. Residues 91 to 187 are disordered; it reads RRAKGKDQTS…KDLTIPESST (97 aa). Phosphoserine is present on Ser130. A Glycyl lysine isopeptide (Lys-Gly) (interchain with G-Cter in SUMO2) cross-link involves residue Lys135. Ser166 bears the Phosphoserine mark. Residues 167–179 constitute a DNA-binding region (a.T hook); it reads PRKRGRPPKDEKD. Residues Lys175, Lys178, Lys200, and Lys210 each participate in a glycyl lysine isopeptide (Lys-Gly) (interchain with G-Cter in SUMO2) cross-link. The interval 213–216 is interaction with histone H3; sequence DPHF. Residues 215–224 form an interaction with KDM1B region; that stretch reads HFHHFLLSQT. Glycyl lysine isopeptide (Lys-Gly) (interchain with G-Cter in SUMO2) cross-links involve residues Lys226, Lys236, Lys239, and Lys268. Residues 260 to 546 are dehydrogenase domain; the sequence is GSITPTDKKI…MSAVYRAYIH (287 aa). Position 270-284 (270-284) interacts with NAD(+); sequence GFLGLGLMGSGIVSN. Lys301 participates in a covalent cross-link: Glycyl lysine isopeptide (Lys-Gly) (interchain with G-Cter in SUMO2). The NAD(+) site is built by Thr355 and Lys498. Ser533 is modified (phosphoserine).

This sequence belongs to the HIBADH-related family. NP60 subfamily. Homotetramere. Interacts with MAPK14. Interacts with KDM1B at nucleosomes; this interaction stimulates H3K4me1 and H3K4me2 demethylation. Binds to mononucleosomes. Interacts with GATA4; the interaction is required for a synergistic activation of GATA4 target genes transcription.

It localises to the nucleus. Its subcellular location is the chromosome. Functionally, cytokine-like nuclear factor with chromatin gene reader activity involved in chromatin modification and regulation of gene expression. Acts as a nucleosome-destabilizing factor that is recruited to genes during transcriptional activation. Recognizes and binds histone H3 without a preference for specific epigenetic markers and also binds DNA. Interacts with KDM1B and promotes its histone demethylase activity by facilitating the capture of H3 tails, they form a multifunctional enzyme complex that modifies transcribed chromatin and facilitates Pol II transcription through nucleosomes. Stimulates the acetylation of 'Lys-56' of nucleosomal histone H3 (H3K56ac) by EP300. With GATA4, co-binds a defined set of heart development genes and coregulates their expression during cardiomyocyte differentiation. Regulates p38 MAP kinase activity by mediating stress activation of MAPK14/p38alpha and specifically regulating MAPK14 signaling. Indirectly promotes phosphorylation of MAPK14 and activation of ATF2. The phosphorylation of MAPK14 requires upstream activity of MAP2K4 and MAP2K6. The chain is Cytokine-like nuclear factor N-PAC from Mus musculus (Mouse).